The following is a 383-amino-acid chain: S-adenosylmethionine synthase (383 aa).

Residue His15 coordinates ATP. Asp17 provides a ligand contact to Mg(2+). A K(+)-binding site is contributed by Glu43. The L-methionine site is built by Glu56 and Gln99. The tract at residues 99 to 109 (QSQDINQGVDR) is flexible loop. Residues 164–166 (DAK), 230–231 (RF), Asp239, 245–246 (RK), Ala262, and Lys266 each bind ATP. Asp239 contacts L-methionine. Lys270 contacts L-methionine.

This sequence belongs to the AdoMet synthase family. In terms of assembly, homotetramer; dimer of dimers. Mg(2+) is required as a cofactor. The cofactor is K(+).

It is found in the cytoplasm. It catalyses the reaction L-methionine + ATP + H2O = S-adenosyl-L-methionine + phosphate + diphosphate. The protein operates within amino-acid biosynthesis; S-adenosyl-L-methionine biosynthesis; S-adenosyl-L-methionine from L-methionine: step 1/1. Catalyzes the formation of S-adenosylmethionine (AdoMet) from methionine and ATP. The overall synthetic reaction is composed of two sequential steps, AdoMet formation and the subsequent tripolyphosphate hydrolysis which occurs prior to release of AdoMet from the enzyme. This Actinobacillus succinogenes (strain ATCC 55618 / DSM 22257 / CCUG 43843 / 130Z) protein is S-adenosylmethionine synthase.